The following is a 417-amino-acid chain: Candidapepsin-4 (417 aa).

A signal peptide spans 1 to 18 (MFLQNILSVLAFALLIDA). The propeptide at 19 to 75 (APVKRSTGFVTLDFNVKRSLVDPKDPTVEVKRSPLFLDIEPTEIPVDDTGRNDVGKR) is activation peptide. Positions 89-403 (YSADITIGSN…DLDDRKISMA (315 aa)) constitute a Peptidase A1 domain. Residue D107 is part of the active site. C122 and C134 form a disulfide bridge. The N-linked (GlcNAc...) asparagine glycan is linked to N137. D293 is an active-site residue. A disulfide bridge connects residues C331 and C369.

It belongs to the peptidase A1 family. O-glycosylated.

It localises to the secreted. It carries out the reaction Preferential cleavage at the carboxyl of hydrophobic amino acids, but fails to cleave 15-Leu-|-Tyr-16, 16-Tyr-|-Leu-17 and 24-Phe-|-Phe-25 of insulin B chain. Activates trypsinogen, and degrades keratin.. The protein is Candidapepsin-4 (SAP4) of Candida albicans (strain WO-1) (Yeast).